The following is a 396-amino-acid chain: Mannonate dehydratase (396 aa).

Belongs to the mannonate dehydratase family. It depends on Fe(2+) as a cofactor. Mn(2+) serves as cofactor.

It carries out the reaction D-mannonate = 2-dehydro-3-deoxy-D-gluconate + H2O. The protein operates within carbohydrate metabolism; pentose and glucuronate interconversion. Its function is as follows. Catalyzes the dehydration of D-mannonate. The sequence is that of Mannonate dehydratase from Yersinia enterocolitica serotype O:8 / biotype 1B (strain NCTC 13174 / 8081).